A 134-amino-acid polypeptide reads, in one-letter code: MTLNLCVLTPNRSIWNSEVKEIILSTNSGQIGVLPNHAPTATAVDIGILRIRLNDQWLTLALMGGFARIGNNEITILVNDAERGSDIDPQEAQQTLEIAEANLRKAEGKRQKIEANLALRRARTRVEASNTISS.

This sequence belongs to the ATPase epsilon chain family. F-type ATPases have 2 components, CF(1) - the catalytic core - and CF(0) - the membrane proton channel. CF(1) has five subunits: alpha(3), beta(3), gamma(1), delta(1), epsilon(1). CF(0) has three main subunits: a, b and c.

It is found in the plastid. The protein resides in the chloroplast thylakoid membrane. Functionally, produces ATP from ADP in the presence of a proton gradient across the membrane. This Spinacia oleracea (Spinach) protein is ATP synthase epsilon chain, chloroplastic.